Reading from the N-terminus, the 470-residue chain is Na(+)-translocating NADH-quinone reductase subunit A (470 aa).

The protein belongs to the NqrA family. Composed of six subunits; NqrA, NqrB, NqrC, NqrD, NqrE and NqrF.

It carries out the reaction a ubiquinone + n Na(+)(in) + NADH + H(+) = a ubiquinol + n Na(+)(out) + NAD(+). In terms of biological role, NQR complex catalyzes the reduction of ubiquinone-1 to ubiquinol by two successive reactions, coupled with the transport of Na(+) ions from the cytoplasm to the periplasm. NqrA to NqrE are probably involved in the second step, the conversion of ubisemiquinone to ubiquinol. This chain is Na(+)-translocating NADH-quinone reductase subunit A, found in Chlamydia caviae (strain ATCC VR-813 / DSM 19441 / 03DC25 / GPIC) (Chlamydophila caviae).